Consider the following 415-residue polypeptide: Gamma-glutamyl phosphate reductase (415 aa).

Belongs to the gamma-glutamyl phosphate reductase family.

Its subcellular location is the cytoplasm. It catalyses the reaction L-glutamate 5-semialdehyde + phosphate + NADP(+) = L-glutamyl 5-phosphate + NADPH + H(+). The protein operates within amino-acid biosynthesis; L-proline biosynthesis; L-glutamate 5-semialdehyde from L-glutamate: step 2/2. Functionally, catalyzes the NADPH-dependent reduction of L-glutamate 5-phosphate into L-glutamate 5-semialdehyde and phosphate. The product spontaneously undergoes cyclization to form 1-pyrroline-5-carboxylate. The protein is Gamma-glutamyl phosphate reductase of Mycobacterium bovis (strain BCG / Pasteur 1173P2).